Reading from the N-terminus, the 340-residue chain is NADH-quinone oxidoreductase subunit H 2 (340 aa).

The next 8 membrane-spanning stretches (helical) occupy residues 10–30 (LIVAFGLIVFKVALLIAILLL), 84–104 (FLFKLAPILALAPPFVVFVAI), 126–146 (VALLFVFAVIGIEVFGVIFGG), 172–192 (MGFAVIGVVMLAQSMSLLDIV), 198–218 (VWNIVYQPVGFFVFFVAGLAE), 255–275 (VIVLLVSVLLVILFFGGWNGI), 279–299 (MPPLLWFLLKVAFFVYLFIWF), and 318–338 (VLLPLSMANIIITGVLLGAAA).

The protein belongs to the complex I subunit 1 family. In terms of assembly, NDH-1 is composed of 14 different subunits. Subunits NuoA, H, J, K, L, M, N constitute the membrane sector of the complex.

Its subcellular location is the cell inner membrane. It carries out the reaction a quinone + NADH + 5 H(+)(in) = a quinol + NAD(+) + 4 H(+)(out). In terms of biological role, NDH-1 shuttles electrons from NADH, via FMN and iron-sulfur (Fe-S) centers, to quinones in the respiratory chain. The immediate electron acceptor for the enzyme in this species is believed to be ubiquinone. Couples the redox reaction to proton translocation (for every two electrons transferred, four hydrogen ions are translocated across the cytoplasmic membrane), and thus conserves the redox energy in a proton gradient. This subunit may bind ubiquinone. The sequence is that of NADH-quinone oxidoreductase subunit H 2 from Rhizobium etli (strain ATCC 51251 / DSM 11541 / JCM 21823 / NBRC 15573 / CFN 42).